Reading from the N-terminus, the 271-residue chain is Formamidopyrimidine-DNA glycosylase (271 aa).

Pro-2 serves as the catalytic Schiff-base intermediate with DNA. Residue Glu-3 is the Proton donor of the active site. Catalysis depends on Lys-58, which acts as the Proton donor; for beta-elimination activity. DNA contacts are provided by His-92, Arg-111, and Arg-152. The segment at 237 to 271 (FVYGREGEACKQCGRVLKHATIGQRATVWCGSCQR) adopts an FPG-type zinc-finger fold. Arg-261 (proton donor; for delta-elimination activity) is an active-site residue.

This sequence belongs to the FPG family. Monomer. The cofactor is Zn(2+).

It carries out the reaction Hydrolysis of DNA containing ring-opened 7-methylguanine residues, releasing 2,6-diamino-4-hydroxy-5-(N-methyl)formamidopyrimidine.. The catalysed reaction is 2'-deoxyribonucleotide-(2'-deoxyribose 5'-phosphate)-2'-deoxyribonucleotide-DNA = a 3'-end 2'-deoxyribonucleotide-(2,3-dehydro-2,3-deoxyribose 5'-phosphate)-DNA + a 5'-end 5'-phospho-2'-deoxyribonucleoside-DNA + H(+). Functionally, involved in base excision repair of DNA damaged by oxidation or by mutagenic agents. Acts as a DNA glycosylase that recognizes and removes damaged bases. Has a preference for oxidized purines, such as 7,8-dihydro-8-oxoguanine (8-oxoG). Has AP (apurinic/apyrimidinic) lyase activity and introduces nicks in the DNA strand. Cleaves the DNA backbone by beta-delta elimination to generate a single-strand break at the site of the removed base with both 3'- and 5'-phosphates. The sequence is that of Formamidopyrimidine-DNA glycosylase from Xanthomonas axonopodis pv. citri (strain 306).